The chain runs to 442 residues: Tryptophan synthase beta chain 2 (442 aa).

N6-(pyridoxal phosphate)lysine is present on Lys122.

This sequence belongs to the TrpB family. In terms of assembly, tetramer of two alpha and two beta chains. Pyridoxal 5'-phosphate is required as a cofactor.

It carries out the reaction (1S,2R)-1-C-(indol-3-yl)glycerol 3-phosphate + L-serine = D-glyceraldehyde 3-phosphate + L-tryptophan + H2O. The protein operates within amino-acid biosynthesis; L-tryptophan biosynthesis; L-tryptophan from chorismate: step 5/5. In terms of biological role, the beta subunit is responsible for the synthesis of L-tryptophan from indole and L-serine. The protein is Tryptophan synthase beta chain 2 (trpB2) of Methanosarcina mazei (strain ATCC BAA-159 / DSM 3647 / Goe1 / Go1 / JCM 11833 / OCM 88) (Methanosarcina frisia).